Here is a 471-residue protein sequence, read N- to C-terminus: Probable flavin-containing monoamine oxidase B (471 aa).

C406 bears the S-8alpha-FAD cysteine mark.

This sequence belongs to the flavin monoamine oxidase family. Requires FAD as cofactor.

It carries out the reaction a secondary aliphatic amine + O2 + H2O = a primary amine + an aldehyde + H2O2. The chain is Probable flavin-containing monoamine oxidase B (maoB-1) from Dictyostelium discoideum (Social amoeba).